We begin with the raw amino-acid sequence, 334 residues long: N-acetyl-gamma-glutamyl-phosphate reductase (334 aa).

Residue Cys-145 is part of the active site. The segment at 173 to 192 (GISGSGQDPTEGTHYPNVTQ) is disordered.

The protein belongs to the NAGSA dehydrogenase family. Type 1 subfamily.

The protein resides in the cytoplasm. It carries out the reaction N-acetyl-L-glutamate 5-semialdehyde + phosphate + NADP(+) = N-acetyl-L-glutamyl 5-phosphate + NADPH + H(+). It participates in amino-acid biosynthesis; L-arginine biosynthesis; N(2)-acetyl-L-ornithine from L-glutamate: step 3/4. Catalyzes the NADPH-dependent reduction of N-acetyl-5-glutamyl phosphate to yield N-acetyl-L-glutamate 5-semialdehyde. This is N-acetyl-gamma-glutamyl-phosphate reductase from Methanocella arvoryzae (strain DSM 22066 / NBRC 105507 / MRE50).